Reading from the N-terminus, the 591-residue chain is Probable methyltransferase PMT6 (591 aa).

Over 1 to 13 (MRGSVIGAERSGQ) the chain is Cytoplasmic. The chain crosses the membrane as a helical; Signal-anchor for type II membrane protein span at residues 14-34 (TIMVALVLMVGSFYTGSLFGT). Topologically, residues 35 to 591 (NQPIYVSHPS…FCRKRFWAII (557 aa)) are lumenal. Residues Asn87, Asn99, Asn146, Asn193, Asn323, Asn436, Asn473, and Asn515 are each glycosylated (N-linked (GlcNAc...) asparagine).

This sequence belongs to the methyltransferase superfamily.

It is found in the endoplasmic reticulum membrane. The protein is Probable methyltransferase PMT6 of Arabidopsis thaliana (Mouse-ear cress).